We begin with the raw amino-acid sequence, 315 residues long: Probable cell division protein WhiA (315 aa).

The H-T-H motif DNA-binding region spans 275–309; sequence TLKELGEMVSSGTVSKSGVNHRLRKIDEIADALRR.

It belongs to the WhiA family.

Involved in cell division and chromosome segregation. This is Probable cell division protein WhiA from Lysinibacillus sphaericus (strain C3-41).